A 496-amino-acid chain; its full sequence is Probable histidine ammonia-lyase (496 aa).

Residues Ala141–Gly143 constitute a cross-link (5-imidazolinone (Ala-Gly)). At Ser142 the chain carries 2,3-didehydroalanine (Ser).

Belongs to the PAL/histidase family. Contains an active site 4-methylidene-imidazol-5-one (MIO), which is formed autocatalytically by cyclization and dehydration of residues Ala-Ser-Gly.

The protein resides in the cytoplasm. The catalysed reaction is L-histidine = trans-urocanate + NH4(+). Its pathway is amino-acid degradation; L-histidine degradation into L-glutamate; N-formimidoyl-L-glutamate from L-histidine: step 1/3. The sequence is that of Probable histidine ammonia-lyase from Thermoplasma acidophilum (strain ATCC 25905 / DSM 1728 / JCM 9062 / NBRC 15155 / AMRC-C165).